Reading from the N-terminus, the 425-residue chain is Glutamate-1-semialdehyde 2,1-aminomutase (425 aa).

N6-(pyridoxal phosphate)lysine is present on K264.

It belongs to the class-III pyridoxal-phosphate-dependent aminotransferase family. HemL subfamily. In terms of assembly, homodimer. Pyridoxal 5'-phosphate serves as cofactor.

It localises to the cytoplasm. The enzyme catalyses (S)-4-amino-5-oxopentanoate = 5-aminolevulinate. It participates in porphyrin-containing compound metabolism; protoporphyrin-IX biosynthesis; 5-aminolevulinate from L-glutamyl-tRNA(Glu): step 2/2. The sequence is that of Glutamate-1-semialdehyde 2,1-aminomutase from Campylobacter lari (strain RM2100 / D67 / ATCC BAA-1060).